Consider the following 188-residue polypeptide: Elongation factor P (188 aa).

The protein belongs to the elongation factor P family.

It is found in the cytoplasm. Its pathway is protein biosynthesis; polypeptide chain elongation. Its function is as follows. Involved in peptide bond synthesis. Stimulates efficient translation and peptide-bond synthesis on native or reconstituted 70S ribosomes in vitro. Probably functions indirectly by altering the affinity of the ribosome for aminoacyl-tRNA, thus increasing their reactivity as acceptors for peptidyl transferase. In Flavobacterium johnsoniae (strain ATCC 17061 / DSM 2064 / JCM 8514 / BCRC 14874 / CCUG 350202 / NBRC 14942 / NCIMB 11054 / UW101) (Cytophaga johnsonae), this protein is Elongation factor P.